The following is a 408-amino-acid chain: Glucose-1-phosphate adenylyltransferase (408 aa).

Alpha-D-glucose 1-phosphate-binding positions include Tyr100, Gly165, 180–181 (EK), and Ser198.

This sequence belongs to the bacterial/plant glucose-1-phosphate adenylyltransferase family. As to quaternary structure, homotetramer.

The enzyme catalyses alpha-D-glucose 1-phosphate + ATP + H(+) = ADP-alpha-D-glucose + diphosphate. It functions in the pathway glycan biosynthesis; glycogen biosynthesis. Functionally, involved in the biosynthesis of ADP-glucose, a building block required for the elongation reactions to produce glycogen. Catalyzes the reaction between ATP and alpha-D-glucose 1-phosphate (G1P) to produce pyrophosphate and ADP-Glc. The sequence is that of Glucose-1-phosphate adenylyltransferase from Cutibacterium acnes (strain DSM 16379 / KPA171202) (Propionibacterium acnes).